A 502-amino-acid chain; its full sequence is Protein YdgA (502 aa).

The first 19 residues, 1-19, serve as a signal peptide directing secretion; the sequence is MNKSLVAVGVIVALGVVWT.

To E.coli YihF and H.influenzae HI_1236. Homodimer.

Its subcellular location is the cell inner membrane. The sequence is that of Protein YdgA (ydgA) from Escherichia coli (strain K12).